The primary structure comprises 238 residues: Enolase-phosphatase E1 (238 aa).

This sequence belongs to the HAD-like hydrolase superfamily. MasA/MtnC family. As to quaternary structure, monomer. Requires Mg(2+) as cofactor.

It carries out the reaction 5-methylsulfanyl-2,3-dioxopentyl phosphate + H2O = 1,2-dihydroxy-5-(methylsulfanyl)pent-1-en-3-one + phosphate. It participates in amino-acid biosynthesis; L-methionine biosynthesis via salvage pathway; L-methionine from S-methyl-5-thio-alpha-D-ribose 1-phosphate: step 3/6. The protein operates within amino-acid biosynthesis; L-methionine biosynthesis via salvage pathway; L-methionine from S-methyl-5-thio-alpha-D-ribose 1-phosphate: step 4/6. Functionally, bifunctional enzyme that catalyzes the enolization of 2,3-diketo-5-methylthiopentyl-1-phosphate (DK-MTP-1-P) into the intermediate 2-hydroxy-3-keto-5-methylthiopentenyl-1-phosphate (HK-MTPenyl-1-P), which is then dephosphorylated to form the acireductone 1,2-dihydroxy-3-keto-5-methylthiopentene (DHK-MTPene). The polypeptide is Enolase-phosphatase E1 (Synechococcus elongatus (strain ATCC 33912 / PCC 7942 / FACHB-805) (Anacystis nidulans R2)).